The primary structure comprises 432 residues: Phosphomethylpyrimidine synthase (432 aa).

Residues asparagine 66, methionine 95, tyrosine 124, histidine 163, 185-187 (SRG), 226-229 (DGLR), and glutamate 265 each bind substrate. Residue histidine 269 participates in Zn(2+) binding. Residue tyrosine 292 coordinates substrate. Residue histidine 333 participates in Zn(2+) binding. Cysteine 409, cysteine 412, and cysteine 416 together coordinate [4Fe-4S] cluster.

Belongs to the ThiC family. Requires [4Fe-4S] cluster as cofactor.

The enzyme catalyses 5-amino-1-(5-phospho-beta-D-ribosyl)imidazole + S-adenosyl-L-methionine = 4-amino-2-methyl-5-(phosphooxymethyl)pyrimidine + CO + 5'-deoxyadenosine + formate + L-methionine + 3 H(+). It functions in the pathway cofactor biosynthesis; thiamine diphosphate biosynthesis. Catalyzes the synthesis of the hydroxymethylpyrimidine phosphate (HMP-P) moiety of thiamine from aminoimidazole ribotide (AIR) in a radical S-adenosyl-L-methionine (SAM)-dependent reaction. The protein is Phosphomethylpyrimidine synthase of Moorella thermoacetica (strain ATCC 39073 / JCM 9320).